A 475-amino-acid polypeptide reads, in one-letter code: MSPKTETKASVGFKAGVKDYRLTYYTPEYQTKDTDILAAFRVTPQPGVPPEEAGAAVAAESSTGTWTTVWTDGLTSLDRYKGRCYDIEPVPGEETQFIAYVAYPLDLFEEGSVTNLFTSIVGNVFGFKALRALRLEDLRIPPSYSKTFQGPPHGIQVERDKLNKYGRPLLGCTIKPKLGLSAKNYGRAVYECLRGGLDFTKDDENVNSQPFMRWRDRFVFCAEAINKAQAETGEIKGHYLNATAGTCEEMIKRAVFARELGVPIVMHDYLTGGFTANTSLAHYCRDNGLLLHIHRAMHAVIDRQRNHGMHFRVLAKALRMSGGDHIHAGTVVGKLEGERDVTLGFVDLLRDDFIEKDRSRGIYFTQDWVSMPGVMPVASGGIHVWHMPALTEIFGDDSVLQFGGGTLGHPWGNAPGAVANRVALEACVQARNEGRDLAREGNEVIREACKWSPELAAACEIWKEIKFEFDVIDRL.

A propeptide spanning residues 1 to 2 is cleaved from the precursor; it reads MS. Position 3 is an N-acetylproline (proline 3). Position 14 is an N6,N6,N6-trimethyllysine (lysine 14). 2 residues coordinate substrate: asparagine 123 and threonine 173. The active-site Proton acceptor is lysine 175. Lysine 177 provides a ligand contact to substrate. Lysine 201, aspartate 203, and glutamate 204 together coordinate Mg(2+). An N6-carboxylysine modification is found at lysine 201. Catalysis depends on histidine 294, which acts as the Proton acceptor. Substrate is bound by residues arginine 295, histidine 327, and serine 379.

Belongs to the RuBisCO large chain family. Type I subfamily. As to quaternary structure, heterohexadecamer of 8 large chains and 8 small chains; disulfide-linked. The disulfide link is formed within the large subunit homodimers. Mg(2+) is required as a cofactor. The disulfide bond which can form in the large chain dimeric partners within the hexadecamer appears to be associated with oxidative stress and protein turnover.

The protein localises to the plastid. It localises to the chloroplast. It carries out the reaction 2 (2R)-3-phosphoglycerate + 2 H(+) = D-ribulose 1,5-bisphosphate + CO2 + H2O. The catalysed reaction is D-ribulose 1,5-bisphosphate + O2 = 2-phosphoglycolate + (2R)-3-phosphoglycerate + 2 H(+). Its function is as follows. RuBisCO catalyzes two reactions: the carboxylation of D-ribulose 1,5-bisphosphate, the primary event in carbon dioxide fixation, as well as the oxidative fragmentation of the pentose substrate in the photorespiration process. Both reactions occur simultaneously and in competition at the same active site. In Pinus pinea (Italian stone pine), this protein is Ribulose bisphosphate carboxylase large chain.